A 330-amino-acid polypeptide reads, in one-letter code: MGDFDLNVDSLIQRLLEMRSCRTGKQVQMTEAEVRGLCLKSREIFLQQPILLELEAPLIICGDIHGQYTDLLRLFEYGGFPPAANYLFLGDYVDRGKQSLETICLLLAYKIKYPENFFLLRGNHECASINRIYGFYDECKRRYNVKLWKTFTDCFNCLPVAAIIDEKIFCCHGGLSPDLQGMEQIRRLMRPTDVPDTGLLCDLLWSDPDKDVQGWGENDRGVSFTFGVDVVSKFLNRHELDLICRAHQVVEDGYEFFARRQLVTLFSAPNYCGEFDNAGGMMTVDDTLMCSFQILKPSEKKAKYLYSGMNSSRPTTPQRSAPMLATNKKK.

Mn(2+) contacts are provided by aspartate 63, histidine 65, aspartate 91, and asparagine 123. The Proton donor role is filled by histidine 124. Positions 172 and 247 each coordinate Mn(2+). A compositionally biased stretch (polar residues) spans 308-319 (GMNSSRPTTPQR). The tract at residues 308–330 (GMNSSRPTTPQRSAPMLATNKKK) is disordered. Phosphothreonine occurs at positions 315 and 316.

The protein belongs to the PPP phosphatase family. PP-1 subfamily. As to quaternary structure, interacts with Nop17l. Interacts with uri; uri inhibits flw phosphatase activity. Requires Mn(2+) as cofactor.

It carries out the reaction O-phospho-L-seryl-[protein] + H2O = L-seryl-[protein] + phosphate. The catalysed reaction is O-phospho-L-threonyl-[protein] + H2O = L-threonyl-[protein] + phosphate. In terms of biological role, required for cell adhesion in non-muscle tissues and in maintenance of muscle attachment. Vital for larval development. This Drosophila melanogaster (Fruit fly) protein is Serine/threonine-protein phosphatase beta isoform (flw).